Consider the following 139-residue polypeptide: Protocatechuate 4,5-dioxygenase alpha chain (139 aa).

Composed of two subunits (alpha and beta) in a 1:1 ratio. Fe(2+) is required as a cofactor.

The catalysed reaction is 3,4-dihydroxybenzoate + O2 = 4-carboxy-2-hydroxy-cis,cis-muconate 6-semialdehyde + H(+). Functionally, responsible for the aromatic ring fission of protocatechuate. This chain is Protocatechuate 4,5-dioxygenase alpha chain (ligA), found in Sphingobium sp. (strain NBRC 103272 / SYK-6).